The primary structure comprises 695 residues: Elongation factor G (695 aa).

The region spanning 8–282 is the tr-type G domain; sequence EKTRNIGIMA…AVLDYLPAPT (275 aa). GTP-binding positions include 17–24, 81–85, and 135–138; these read AHIDAGKT, DTPGH, and NKMD.

The protein belongs to the TRAFAC class translation factor GTPase superfamily. Classic translation factor GTPase family. EF-G/EF-2 subfamily.

The protein resides in the cytoplasm. Its function is as follows. Catalyzes the GTP-dependent ribosomal translocation step during translation elongation. During this step, the ribosome changes from the pre-translocational (PRE) to the post-translocational (POST) state as the newly formed A-site-bound peptidyl-tRNA and P-site-bound deacylated tRNA move to the P and E sites, respectively. Catalyzes the coordinated movement of the two tRNA molecules, the mRNA and conformational changes in the ribosome. This Listeria monocytogenes serotype 4b (strain CLIP80459) protein is Elongation factor G.